Reading from the N-terminus, the 658-residue chain is UvrABC system protein B (658 aa).

One can recognise a Helicase ATP-binding domain in the interval 26–414 (AGLKKGLKHQ…PDVIEQIIRP (389 aa)). 39 to 46 (GATGTGKT) is a binding site for ATP. The short motif at 92-115 (YYDYYQPEAYVPQSDTYIEKDASI) is the Beta-hairpin element. In terms of domain architecture, Helicase C-terminal spans 430 to 592 (QIDDLMDEIN…ITPKTIKKEI (163 aa)). Residues 622–658 (DVFIEGMEHEMKEAAKALDFERAAELRDALLEIKAEG) form the UVR domain.

The protein belongs to the UvrB family. In terms of assembly, forms a heterotetramer with UvrA during the search for lesions. Interacts with UvrC in an incision complex.

It localises to the cytoplasm. Its function is as follows. The UvrABC repair system catalyzes the recognition and processing of DNA lesions. A damage recognition complex composed of 2 UvrA and 2 UvrB subunits scans DNA for abnormalities. Upon binding of the UvrA(2)B(2) complex to a putative damaged site, the DNA wraps around one UvrB monomer. DNA wrap is dependent on ATP binding by UvrB and probably causes local melting of the DNA helix, facilitating insertion of UvrB beta-hairpin between the DNA strands. Then UvrB probes one DNA strand for the presence of a lesion. If a lesion is found the UvrA subunits dissociate and the UvrB-DNA preincision complex is formed. This complex is subsequently bound by UvrC and the second UvrB is released. If no lesion is found, the DNA wraps around the other UvrB subunit that will check the other stand for damage. The sequence is that of UvrABC system protein B from Listeria monocytogenes serotype 4b (strain F2365).